Consider the following 133-residue polypeptide: Small ribosomal subunit protein uS8 (133 aa).

The protein belongs to the universal ribosomal protein uS8 family. As to quaternary structure, part of the 30S ribosomal subunit. Contacts proteins S5 and S12.

In terms of biological role, one of the primary rRNA binding proteins, it binds directly to 16S rRNA central domain where it helps coordinate assembly of the platform of the 30S subunit. This chain is Small ribosomal subunit protein uS8, found in Chlamydia trachomatis serovar L2b (strain UCH-1/proctitis).